We begin with the raw amino-acid sequence, 359 residues long: GATA-binding factor 1-A (359 aa).

The disordered stretch occupies residues 1 to 21 (MDYTTLTTQDPDPNYTESGLA). 2 GATA-type zinc fingers span residues 178-202 (CVNC…CNAC) and 232-256 (CSNC…CNAC). Disordered regions lie at residues 271-311 (MKKE…SPYP) and 323-359 (PMGH…VTPP). The segment covering 279–291 (RNRKVSSRSKKKK) has biased composition (basic residues).

As to expression, expressed in the developing ventral blood island, and in both tadpole and adult erythrocytes.

It is found in the nucleus. Functionally, transcription factor that acts synergistically with tal1/scl and lmo2 to specify embryonic dorsal mesoderm to a hematopoietic fate. In Xenopus laevis (African clawed frog), this protein is GATA-binding factor 1-A (gata1-a).